The chain runs to 303 residues: MSFTIKVKEEIIAASSKDIAELSALIKMSGSVGLTNQGLTLSISTENAKIARHIYQLIENRYRCNPELRHYNKTNLKKNRVYTVFVAENVNDILSDLQLADSFFGFETGIETSIMEDDDAGRSYLRGAFLATGTVRDPEKGRYQLEIFSVYQDHAEDLASLMKKFMLDAKVLQHKNGFVTYLQKAEDIMDFLIVIGAMTSKEIFEEVKIMRETRNDLNRANNAETANIARTISASMKTINNIIKIMDTVGLEILPVELRQIAQLRIANPDYSIQQIADSIEPPLTKSGVNHRLRKINKIADDL.

Positions Ser-272–Leu-303 form a DNA-binding region, H-T-H motif.

It belongs to the WhiA family.

Functionally, involved in cell division and chromosome segregation. This is Probable cell division protein WhiA from Streptococcus thermophilus (strain ATCC BAA-250 / LMG 18311).